We begin with the raw amino-acid sequence, 235 residues long: Sperm annulus positionning complex subunit Chibby3 (235 aa).

The interval 1–41 is disordered; it reads MADSKMKWGQAWDSSLGTATTSSSSATGSPSPFQNIRVPDT. Low complexity predominate over residues 14 to 32; sequence SSLGTATTSSSSATGSPSP. The segment at 167–181 is leucine-zipper; mediates homodimerization; it reads LLEENNYLKLQQELL.

The protein belongs to the chibby family. Homodimer. Interacts with CIBAR1 (via BAR-like domain); both proteins form a ninefold symmetric structure at the flagellar base; are recruited to the annulus in a mutually dependent manner and regulate annulus positionning. In terms of tissue distribution, testis-specific.

The protein resides in the cell projection. Its subcellular location is the cilium. The protein localises to the flagellum. In terms of biological role, plays a key role in the correct positioning of the annulus, a septin-based ring strucure in the sperm flagellum, serving both as a physical barrier and a membrane diffusion barrier that separates the midpiece (MP) from the principal piece (PP). This positioning is essential for proper sperm motility and function. Interacts with CIBAR1 to form a complex which localizes to the curved membrane region of the flagellar pocket. By doing so, may provide stability and rigidity to the periannular membrane to prevent membrane deformation. This function is crucial for halting annulus migration at the proximal end of the fibrous sheath-containing PP. This chain is Sperm annulus positionning complex subunit Chibby3 (Cby3), found in Mus musculus (Mouse).